The sequence spans 337 residues: MKFSGSHILSVEQFERADIERIFAVADSMEPYALRQKVTRVLEGAILGNMFFEPSTRTRVSFGCAFNLLGGEVRETTGFKSSAIAKGESLYDTARVLSGYSDVICMRHPQEGSVAEFAQASRVPVINGGDGANEHPSQALLDLYTIQKELRDKGRSLDGLRIAMIGDLKHGRTVHSLMRLLGLFANLQVVLVSPEELAMPEEYVELLRGLGHRVDVSSDLANSIGHVDIVYSTRIQEERFGSKEEADLYRGRFRLNQAIYTQFCEPNTVIMHPLPRDSRSDANELDNDLNQNPNLAIFRQTDNGILVRMALFALILDVADQVDKFSRPVNWYHSRTF.

Positions 57 and 58 each coordinate carbamoyl phosphate. Lys86 provides a ligand contact to L-aspartate. Carbamoyl phosphate contacts are provided by Arg107, His135, and Gln138. L-aspartate-binding residues include Arg172 and Arg234. Positions 274 and 275 each coordinate carbamoyl phosphate.

It belongs to the aspartate/ornithine carbamoyltransferase superfamily. ATCase family. Heterododecamer (2C3:3R2) of six catalytic PyrB chains organized as two trimers (C3), and six regulatory PyrI chains organized as three dimers (R2).

The catalysed reaction is carbamoyl phosphate + L-aspartate = N-carbamoyl-L-aspartate + phosphate + H(+). Its pathway is pyrimidine metabolism; UMP biosynthesis via de novo pathway; (S)-dihydroorotate from bicarbonate: step 2/3. Catalyzes the condensation of carbamoyl phosphate and aspartate to form carbamoyl aspartate and inorganic phosphate, the committed step in the de novo pyrimidine nucleotide biosynthesis pathway. In Saccharophagus degradans (strain 2-40 / ATCC 43961 / DSM 17024), this protein is Aspartate carbamoyltransferase catalytic subunit.